Here is a 317-residue protein sequence, read N- to C-terminus: COP9 signalosome complex subunit 6a (317 aa).

The MPN domain occupies 30–164; the sequence is TQLNPPASIC…VTIYESELHV (135 aa).

Belongs to the peptidase M67A family. CSN6 subfamily. In terms of assembly, component of the CSN complex, probably composed of CSN1, CSN2, CSN3, CSN4, CSN5 (CSN5A or CSN5B), CSN6 (CSN6A or CSN6B), CSN7 and CSN8. Interacts with itself. In the complex, it probably interacts directly with CSN4 and CSN5A or CSN5B. Interacts with CSN7 (via C-terminal tail). Binds to the translation initiation factors TIF3E1.

The protein resides in the cytoplasm. Its subcellular location is the nucleus. Component of the COP9 signalosome complex (CSN), a complex involved in various cellular and developmental processes such as photomorphogenesis and auxin and jasmonate responses. The CSN complex is an essential regulator of the ubiquitin (Ubl) conjugation pathway by mediating the deneddylation of the cullin subunits of SCF-type E3 ligase complexes, leading to decrease the Ubl ligase activity of SCF. It is involved in repression of photomorphogenesis in darkness by regulating the activity of COP1-containing Ubl ligase complexes. The complex is also required for degradation of PSIAA6 by regulating the activity of the Ubl ligase SCF-TIR complex. Essential for the structural integrity of the CSN holocomplex. In Arabidopsis thaliana (Mouse-ear cress), this protein is COP9 signalosome complex subunit 6a.